The sequence spans 427 residues: Pectin acetylesterase 5 (427 aa).

The signal sequence occupies residues 1–35; it reads MAIPRFSSLLRCRKWAKSDWLVASIGCVLIVFFLS. Asn173 carries N-linked (GlcNAc...) asparagine glycosylation. Catalysis depends on charge relay system residues Ser209, Asp305, and His372. Asn391 is a glycosylation site (N-linked (GlcNAc...) asparagine).

This sequence belongs to the pectinacetylesterase family.

The protein resides in the secreted. It is found in the cell wall. Its function is as follows. Hydrolyzes acetyl esters in homogalacturonan regions of pectin. In type I primary cell wall, galacturonic acid residues of pectin can be acetylated at the O-2 and O-3 positions. Decreasing the degree of acetylation of pectin gels in vitro alters their physical properties. The chain is Pectin acetylesterase 5 from Arabidopsis thaliana (Mouse-ear cress).